A 678-amino-acid chain; its full sequence is MKKFQRPVSFQDLTVNFTQEEWQQLDPTQRLLYRDVMLENYSNLVSVGYHVSKPDVIFKLEQGEAPWIVEEFSNQNYPEVDDALEKNKEIQDKHLTQTVFFSNKTLITERENVFGKTLNLDMNSVPSRKMPYKCNPGGNSLKTNSEVIVAKKSKENRKIPDEYSGFGKHEKSHSGMNKYRCNPMRKASNQNENLILHQNIQILKQPFDYNKCRKTFFKRAILVTQKGRQTERKPNEPCECRKTFSKRSTLVVHQRIHTGEKPYVCNDCRKTFRVKTSLTRHQRIHTGERPYECSECGKTFIDKSALIVHQKIHGGEKSYECNECGKTFFRKSALAEHFRSHTGEKPYECKECGNAFSKKSYLVVHQRTHRGEKPNECKECGKTFFCQSALTAHQRIHTGEKPYECSECEKTFFCQSALNVHRRSHTGEKPYECSQCGKFLCTKSALIAHQITHRGKKSYECNECGKFFCHKSTLTIHQRTHTGEKHDVFNKCGRISIMKSNCSQCKRMNTKENFYECSEHGHAISKNSHLVVHQRTIWERPYECNECGRTYCRKSALTHHQRTHTGERPYECNECGKTFCQKFSFVEHQRTHTGEKPYERNECGKSFCHKSAFRVHRRIHTGEKPYECNQCGKTYRRLWTLTEHQKIHTGEKPYECNKCEKTFRHKSNFLLHQKSHKE.

Positions 8–79 (VSFQDLTVNF…EEFSNQNYPE (72 aa)) constitute a KRAB domain. 14 consecutive C2H2-type zinc fingers follow at residues 235–257 (NEPCECRKTFSKRSTLVVHQRIH), 263–285 (YVCNDCRKTFRVKTSLTRHQRIH), 291–313 (YECSECGKTFIDKSALIVHQKIH), 319–341 (YECNECGKTFFRKSALAEHFRSH), 347–369 (YECKECGNAFSKKSYLVVHQRTH), 375–397 (NECKECGKTFFCQSALTAHQRIH), 403–425 (YECSECEKTFFCQSALNVHRRSH), 431–453 (YECSQCGKFLCTKSALIAHQITH), 459–481 (YECNECGKFFCHKSTLTIHQRTH), 542–564 (YECNECGRTYCRKSALTHHQRTH), 570–592 (YECNECGKTFCQKFSFVEHQRTH), 598–620 (YERNECGKSFCHKSAFRVHRRIH), 626–648 (YECNQCGKTYRRLWTLTEHQKIH), and 654–676 (YECNKCEKTFRHKSNFLLHQKSH).

This sequence belongs to the krueppel C2H2-type zinc-finger protein family.

The protein resides in the nucleus. May be involved in transcriptional regulation. In Pongo abelii (Sumatran orangutan), this protein is Zinc finger protein 334 (ZNF334).